The chain runs to 525 residues: DNA damage-binding protein cmr1 (525 aa).

Residues 34–50 show a composition bias toward polar residues; it reads TGVFTSNMPRGTSANQS. Disordered regions lie at residues 34–103, 214–240, and 282–301; these read TGVF…ERAK, DASQEKPTSAVKNEDDEDDEDDDDPDP, and TSSVEKYAPESTSDDVPISG. The span at 83–102 shows a compositional bias: basic and acidic residues; the sequence is EIAKRKADEEYDRRQEEERA. The stretch at 182–223 is one WD 1 repeat; the sequence is ITPERIYSMTFHPSEAKPVIFAGDKMGHLGILDASQEKPTSA. Residues 227 to 239 are compositionally biased toward acidic residues; sequence EDDEDDEDDDDPD. WD repeat units follow at residues 247–287, 339–379, 384–425, 448–491, and 494–525; these read PHTR…SVEK, LSEK…HTDP, EHQS…SSWK, GRWV…LAQL, and DGITAVPAVAVFHRSKNWVAGGTASGKICLWM.

Belongs to the WD repeat DDB2/WDR76 family.

In terms of biological role, DNA-binding protein that binds to both single- and double-stranded DNA. Binds preferentially to UV-damaged DNA. May be involved in DNA-metabolic processes. This Emericella nidulans (strain FGSC A4 / ATCC 38163 / CBS 112.46 / NRRL 194 / M139) (Aspergillus nidulans) protein is DNA damage-binding protein cmr1.